Consider the following 508-residue polypeptide: Protoporphyrinogen oxidase 2, chloroplastic/mitochondrial (508 aa).

The N-terminal 22 residues, 1–22, are a transit peptide targeting the chloroplast and mitochondrion; the sequence is MASGAVADHQIEAVSGKRVAVV. Residues 23–28, 46–47, and 68–71 each bind FAD; these read GAGVSG, EA, and GANT. A disordered region spans residues 219 to 239; that stretch reads KGGKSRDTKSSPGTKKGSRGS. Residues Val268 and 475-477 each bind FAD; that span reads LSV.

This sequence belongs to the protoporphyrinogen/coproporphyrinogen oxidase family. Protoporphyrinogen oxidase subfamily. The cofactor is FAD.

Its subcellular location is the plastid. The protein resides in the chloroplast. It localises to the mitochondrion. The enzyme catalyses protoporphyrinogen IX + 3 O2 = protoporphyrin IX + 3 H2O2. Its pathway is porphyrin-containing compound metabolism; protoporphyrin-IX biosynthesis; protoporphyrin-IX from protoporphyrinogen-IX: step 1/1. The protein operates within porphyrin-containing compound metabolism; chlorophyll biosynthesis. Catalyzes the 6-electron oxidation of protoporphyrinogen-IX to form protoporphyrin-IX. The chain is Protoporphyrinogen oxidase 2, chloroplastic/mitochondrial (PPOX2) from Arabidopsis thaliana (Mouse-ear cress).